Here is a 175-residue protein sequence, read N- to C-terminus: Alpha-crystallin B chain (175 aa).

Met-1 carries the post-translational modification N-acetylmethionine. Phosphoserine occurs at positions 19, 45, and 59. The 109-residue stretch at 56–164 (RAPSWIDTGL…PERTIPITRE (109 aa)) folds into the sHSP domain. A Zn(2+)-binding site is contributed by His-83. N6-acetyllysine is present on Lys-92. Positions 104, 106, 111, and 119 each coordinate Zn(2+). The tract at residues 145–175 (VNGPRKQASGPERTIPITREEKPAVTAAPKK) is disordered. At Lys-166 the chain carries N6-acetyllysine. Thr-170 is a glycosylation site (O-linked (GlcNAc) threonine).

It belongs to the small heat shock protein (HSP20) family. As to quaternary structure, heteromer composed of three CRYAA and one CRYAB subunits. Aggregates with homologous proteins, including the small heat shock protein HSPB1, to form large heteromeric complexes. Inter-subunit bridging via zinc ions enhances stability, which is crucial as there is no protein turn over in the lens. Interacts with HSPBAP1 and TTN/titin. Interacts with TMEM109; in the cellular response to DNA damage. Interacts with DES; binds rapidly during early stages of DES filament assembly and a reduced binding seen in the later stages. Interacts with TMED10; the interaction mediates the translocation from the cytoplasm into the ERGIC (endoplasmic reticulum-Golgi intermediate compartment) and thereby secretion. Interacts with ATP6V1A and with MTOR, forming a ternary complex. Lens as well as other tissues.

Its subcellular location is the cytoplasm. The protein localises to the nucleus. It localises to the secreted. The protein resides in the lysosome. Functionally, may contribute to the transparency and refractive index of the lens. Has chaperone-like activity, preventing aggregation of various proteins under a wide range of stress conditions. In lens epithelial cells, stabilizes the ATP6V1A protein, preventing its degradation by the proteasome. The protein is Alpha-crystallin B chain (CRYAB) of Mesocricetus auratus (Golden hamster).